An 850-amino-acid chain; its full sequence is DNA polymerase I (850 aa).

Positions 1-288 (MKLVIFDGNS…SIIKRLGLSE (288 aa)) constitute a 5'-3' exonuclease domain. The segment at 470–850 (VDRDALIQYT…KEGLNWYETK (381 aa)) is polymerase.

The protein belongs to the DNA polymerase type-A family.

The catalysed reaction is DNA(n) + a 2'-deoxyribonucleoside 5'-triphosphate = DNA(n+1) + diphosphate. In addition to polymerase activity, this DNA polymerase exhibits 3'-5' and 5'-3' exonuclease activity. This is DNA polymerase I (polA) from Caldicellulosiruptor bescii (strain ATCC BAA-1888 / DSM 6725 / KCTC 15123 / Z-1320) (Anaerocellum thermophilum).